A 362-amino-acid chain; its full sequence is Heme A synthase (362 aa).

The next 5 helical transmembrane spans lie at 15–35 (VRIW…VGGA), 104–124 (VIGI…AIAP), 129–149 (ALWA…WMVA), 161–181 (VRLA…VWTL), and 200–220 (AIAL…VAGL). Residue H264 participates in heme binding. The next 3 membrane-spanning stretches (helical) occupy residues 266–285 (MMAY…ALRA), 293–313 (GALW…LTLL), and 316–336 (VPIG…TLAV). H324 is a heme binding site.

Belongs to the COX15/CtaA family. Type 2 subfamily. Interacts with CtaB. It depends on heme b as a cofactor.

The protein localises to the cell membrane. It catalyses the reaction Fe(II)-heme o + 2 A + H2O = Fe(II)-heme a + 2 AH2. It participates in porphyrin-containing compound metabolism; heme A biosynthesis; heme A from heme O: step 1/1. Functionally, catalyzes the conversion of heme O to heme A by two successive hydroxylations of the methyl group at C8. The first hydroxylation forms heme I, the second hydroxylation results in an unstable dihydroxymethyl group, which spontaneously dehydrates, resulting in the formyl group of heme A. This Rhodopseudomonas palustris (strain BisB5) protein is Heme A synthase.